Here is a 100-residue protein sequence, read N- to C-terminus: Large ribosomal subunit protein uL23 (100 aa).

It belongs to the universal ribosomal protein uL23 family. In terms of assembly, part of the 50S ribosomal subunit. Contacts protein L29, and trigger factor when it is bound to the ribosome.

One of the early assembly proteins it binds 23S rRNA. One of the proteins that surrounds the polypeptide exit tunnel on the outside of the ribosome. Forms the main docking site for trigger factor binding to the ribosome. This is Large ribosomal subunit protein uL23 from Synechococcus sp. (strain CC9902).